The sequence spans 394 residues: Argininosuccinate synthase (394 aa).

ATP contacts are provided by residues 7–15 (AYSGGLDTS) and A34. 2 residues coordinate L-citrulline: Y85 and S90. Residue G115 participates in ATP binding. L-aspartate is bound by residues T117, N121, and D122. N121 serves as a coordination point for L-citrulline. R125, S176, S185, E261, and Y273 together coordinate L-citrulline.

This sequence belongs to the argininosuccinate synthase family. Type 1 subfamily. As to quaternary structure, homotetramer.

The protein resides in the cytoplasm. It carries out the reaction L-citrulline + L-aspartate + ATP = 2-(N(omega)-L-arginino)succinate + AMP + diphosphate + H(+). It participates in amino-acid biosynthesis; L-arginine biosynthesis; L-arginine from L-ornithine and carbamoyl phosphate: step 2/3. This chain is Argininosuccinate synthase, found in Ehrlichia ruminantium (strain Welgevonden).